The chain runs to 121 residues: Chromosome transmission fidelity protein 8 homolog (121 aa).

The protein belongs to the CTF8 family. As to quaternary structure, component of the CTF18-RFC complex, which consists of CTF18, CTF8, DSCC1, RFC2, RFC3, RFC4 and RFC5. The CTF18-RFC complex does not interact with the Rad9/Rad1/Hus1 complex. The CTF18-RFC complex interacts with POLH. CTF18/CTF8/DSCC1 associate with PCNA. CTF8 exists as a dimer with DSCC1.

It is found in the nucleus. Functionally, chromosome cohesion factor involved in sister chromatid cohesion and fidelity of chromosome transmission. Component of one of the cell nuclear antigen loader complexes, CTF18-replication factor C (CTF18-RFC), which consists of CTF18, CTF8, DSCC1, RFC2, RFC3, RFC4 and RFC5. The CTF18-RFC complex binds to single-stranded and primed DNAs and has weak ATPase activity that is stimulated the presence of primed DNA, replication protein A (RPA) and proliferating cell nuclear antigen (PCNA). The CTF18-RFC complex catalyzes the ATP-dependent loading of PCNA onto primed and gapped DNA. It also interacts with and stimulates POLH, which is suggestive of a protein network that coordinates DNA repair, recombination and chromosome cohesion reactions with replication fork progression. This Homo sapiens (Human) protein is Chromosome transmission fidelity protein 8 homolog.